The primary structure comprises 41 residues: uncharacterized protein (41 aa).

This is an uncharacterized protein from Rickettsia prowazekii (strain Madrid E).